Reading from the N-terminus, the 533-residue chain is NAD(P)H-quinone oxidoreductase chain 4 1 (533 aa).

A run of 14 helical transmembrane segments spans residues 6–26, 37–57, 87–107, 113–133, 137–157, 169–189, 209–229, 243–263, 277–297, 311–331, 332–352, 376–396, 417–437, and 461–481; these read FPWL…IPLI, YSLF…WQHF, LSMP…LASW, PKLF…VFTA, MLFF…ISIW, FILY…ALAF, WLEL…LSIF, NAPG…YALI, FAPV…LNAF, ISHM…GLNG, ALLQ…LAGV, FALF…SGFV, VTIL…LSML, and LFVA…PKLT.

Belongs to the complex I subunit 4 family.

It is found in the cellular thylakoid membrane. It catalyses the reaction a plastoquinone + NADH + (n+1) H(+)(in) = a plastoquinol + NAD(+) + n H(+)(out). The enzyme catalyses a plastoquinone + NADPH + (n+1) H(+)(in) = a plastoquinol + NADP(+) + n H(+)(out). Its function is as follows. NDH-1 shuttles electrons from NAD(P)H, via FMN and iron-sulfur (Fe-S) centers, to quinones in the respiratory chain. The immediate electron acceptor for the enzyme in this species is believed to be plastoquinone. Couples the redox reaction to proton translocation (for every two electrons transferred, four hydrogen ions are translocated across the cytoplasmic membrane), and thus conserves the redox energy in a proton gradient. This is NAD(P)H-quinone oxidoreductase chain 4 1 from Synechococcus elongatus (strain ATCC 33912 / PCC 7942 / FACHB-805) (Anacystis nidulans R2).